The primary structure comprises 260 residues: Putative ABC transporter ATP-binding protein PYRAB01300 (260 aa).

Residues 2–234 (IEFKDVWFWY…DLRNFSLVEP (233 aa)) enclose the ABC transporter domain. Position 34 to 41 (34 to 41 (GPNGSGKT)) interacts with ATP.

The protein belongs to the ABC transporter superfamily.

It localises to the cell membrane. Probably part of an ABC transporter complex. Responsible for energy coupling to the transport system. This chain is Putative ABC transporter ATP-binding protein PYRAB01300, found in Pyrococcus abyssi (strain GE5 / Orsay).